The following is a 1349-amino-acid chain: Aldehyde oxidase 2 (1349 aa).

Residues 8–96 (DELVFFVNGR…GAAVTTVEGV (89 aa)) form the 2Fe-2S ferredoxin-type domain. [2Fe-2S] cluster contacts are provided by C47, C52, C55, and C78. Q117 is a binding site for Mo-molybdopterin. The [2Fe-2S] cluster site is built by C118, C121, C153, and C155. A Mo-molybdopterin-binding site is contributed by C155. One can recognise an FAD-binding PCMH-type domain in the interval 240–425 (FYGERVTWIS…ESVHIPHSQK (186 aa)). Residues 268–275 (LVVGNTSL), A349, S358, H362, D371, and L415 contribute to the FAD site. Mo-molybdopterin is bound by residues 816–817 (GF), 1098–1101 (ASVG), Q1213, and L1278. E1280 (proton acceptor; for azaheterocycle hydroxylase activity) is an active-site residue.

The protein belongs to the xanthine dehydrogenase family. In terms of assembly, homodimer. It depends on [2Fe-2S] cluster as a cofactor. The cofactor is FAD. Mo-molybdopterin serves as cofactor. Only detected at very few levels in nasal mucosa.

Its subcellular location is the cytoplasm. It catalyses the reaction an aldehyde + O2 + H2O = a carboxylate + H2O2 + H(+). Oxidase with broad substrate specificity, oxidizing aromatic azaheterocycles, such as phthalazine, as well as aldehydes, such as benzaldehyde and retinal. This Macaca fascicularis (Crab-eating macaque) protein is Aldehyde oxidase 2 (AOX2).